The following is a 306-amino-acid chain: UDP-3-O-acyl-N-acetylglucosamine deacetylase (306 aa).

3 residues coordinate Zn(2+): histidine 79, histidine 238, and aspartate 242. Histidine 265 (proton donor) is an active-site residue.

Belongs to the LpxC family. Zn(2+) serves as cofactor.

The enzyme catalyses a UDP-3-O-[(3R)-3-hydroxyacyl]-N-acetyl-alpha-D-glucosamine + H2O = a UDP-3-O-[(3R)-3-hydroxyacyl]-alpha-D-glucosamine + acetate. It functions in the pathway glycolipid biosynthesis; lipid IV(A) biosynthesis; lipid IV(A) from (3R)-3-hydroxytetradecanoyl-[acyl-carrier-protein] and UDP-N-acetyl-alpha-D-glucosamine: step 2/6. Catalyzes the hydrolysis of UDP-3-O-myristoyl-N-acetylglucosamine to form UDP-3-O-myristoylglucosamine and acetate, the committed step in lipid A biosynthesis. The chain is UDP-3-O-acyl-N-acetylglucosamine deacetylase from Shewanella frigidimarina (strain NCIMB 400).